Reading from the N-terminus, the 510-residue chain is MIELTVAQIAEIVGGAVADISPQDAAHRRVTGTVEFDSRAIGPGGLFLALPGARADGHDHAASAVAAGAAVVLAARPVGVPAIVVPPVAAPNVLAGVLEHDNDGSGAAVLAALAKLATAVAAQLVAGGLTIIGITGSSGKTSTKDLMAAVLAPLGEVVAPPGSFNNELGHPWTVLRATRRTDYLILEMAARHHGNIAALAEIAPPSIGVVLNVGTAHLGEFGSREVIAQTKAELPQAVPHSGAVVLNADDPAVAAMAKLTAARVVRVSRDNTGDVWAGPVSLDELARPRFTLHAHDAQAEVRLGVCGDHQVTNALCAAAVALECGASVEQVAAALTAAPPVSRHRMQVTTRGDGVTVIDDAYNANPDSMRAGLQALAWIAHQPEATRRSWAVLGEMAELGEDAIAEHDRIGRLAVRLDVSRLVVVGTGRSISAMHHGAVLEGAWGSGEATADHGADRTAVNVADGDAALALLRAELRPGDVVLVKASNAAGLGAVADALVADDTCGSVRP.

ATP is bound at residue 136 to 142 (GSSGKTS).

This sequence belongs to the MurCDEF family. MurF subfamily.

It localises to the cytoplasm. It carries out the reaction D-alanyl-D-alanine + UDP-N-acetyl-alpha-D-muramoyl-L-alanyl-gamma-D-glutamyl-meso-2,6-diaminopimelate + ATP = UDP-N-acetyl-alpha-D-muramoyl-L-alanyl-gamma-D-glutamyl-meso-2,6-diaminopimeloyl-D-alanyl-D-alanine + ADP + phosphate + H(+). Its pathway is cell wall biogenesis; peptidoglycan biosynthesis. In terms of biological role, involved in cell wall formation. Catalyzes the final step in the synthesis of UDP-N-acetylmuramoyl-pentapeptide, the precursor of murein. The protein is UDP-N-acetylmuramoyl-tripeptide--D-alanyl-D-alanine ligase of Mycobacterium bovis (strain ATCC BAA-935 / AF2122/97).